A 656-amino-acid chain; its full sequence is DNA ligase (656 aa).

Residues 32–36 (DAVYD) and 81–82 (SL) contribute to the NAD(+) site. Lysine 112 serves as the catalytic N6-AMP-lysine intermediate. NAD(+) is bound by residues arginine 133, glutamate 167, and lysine 306. Cysteine 400, cysteine 403, cysteine 416, and cysteine 421 together coordinate Zn(2+). In terms of domain architecture, BRCT spans 577 to 656 (ESSSVFSNKT…ELLKRLKEFD (80 aa)).

The protein belongs to the NAD-dependent DNA ligase family. LigA subfamily. Requires Mg(2+) as cofactor. The cofactor is Mn(2+).

It catalyses the reaction NAD(+) + (deoxyribonucleotide)n-3'-hydroxyl + 5'-phospho-(deoxyribonucleotide)m = (deoxyribonucleotide)n+m + AMP + beta-nicotinamide D-nucleotide.. Functionally, DNA ligase that catalyzes the formation of phosphodiester linkages between 5'-phosphoryl and 3'-hydroxyl groups in double-stranded DNA using NAD as a coenzyme and as the energy source for the reaction. It is essential for DNA replication and repair of damaged DNA. The protein is DNA ligase of Helicobacter pylori (strain Shi470).